The primary structure comprises 332 residues: uncharacterized protein (332 aa).

A helical membrane pass occupies residues 27 to 47 (CAIVFLCVLLILPFLSCCTSL).

It localises to the membrane. This is an uncharacterized protein from Treponema pallidum (strain Nichols).